We begin with the raw amino-acid sequence, 545 residues long: Protein FAR1-RELATED SEQUENCE 9 (545 aa).

The FAR1 domain occupies 22–65 (LNYLKRRQLENPGFLYAIEDDCGNVFWADPTCRLNYTYFGDTLV). In terms of domain architecture, MULE spans 66 to 150 (FDTTYRRGKR…RVFSQTRLRF (85 aa)). The SWIM-type zinc-finger motif lies at 345 to 381 (HTVSFDSLEVKANCSCQMFEYSGIICRHILAVFSAKN). The interval 460–495 (SNRTPGTRLPNGEAYPSEEARETANATNHPGGEKER) is disordered. Positions 492–545 (EKERTILELTAELERTGQRCEVYRANLLSILRDMEEQKFQLSLKVQNARLSLKE) form a coiled coil.

The protein belongs to the FHY3/FAR1 family. As to expression, expressed in hypocotyls, rosette and cauline leaves, inflorescences stems, flowers and siliques.

The protein resides in the nucleus. Functionally, putative transcription activator involved in regulating light control of development. May act as a negative regulator specific to phyB signaling. The chain is Protein FAR1-RELATED SEQUENCE 9 (FRS9) from Arabidopsis thaliana (Mouse-ear cress).